The primary structure comprises 87 residues: Small ribosomal subunit protein bS20 (87 aa).

The span at 1-15 (MANHKSAMKRIKQTA) shows a compositional bias: basic residues. A disordered region spans residues 1–27 (MANHKSAMKRIKQTAKRTERNKHERST). Residues 16–27 (KRTERNKHERST) are compositionally biased toward basic and acidic residues.

This sequence belongs to the bacterial ribosomal protein bS20 family.

Binds directly to 16S ribosomal RNA. The protein is Small ribosomal subunit protein bS20 of Citrifermentans bemidjiense (strain ATCC BAA-1014 / DSM 16622 / JCM 12645 / Bem) (Geobacter bemidjiensis).